Reading from the N-terminus, the 312-residue chain is Porphobilinogen deaminase (312 aa).

Residue C235 is modified to S-(dipyrrolylmethanemethyl)cysteine.

The protein belongs to the HMBS family. In terms of assembly, monomer. It depends on dipyrromethane as a cofactor.

The catalysed reaction is 4 porphobilinogen + H2O = hydroxymethylbilane + 4 NH4(+). It functions in the pathway porphyrin-containing compound metabolism; protoporphyrin-IX biosynthesis; coproporphyrinogen-III from 5-aminolevulinate: step 2/4. Tetrapolymerization of the monopyrrole PBG into the hydroxymethylbilane pre-uroporphyrinogen in several discrete steps. The sequence is that of Porphobilinogen deaminase from Mycolicibacterium gilvum (strain PYR-GCK) (Mycobacterium gilvum (strain PYR-GCK)).